The chain runs to 231 residues: Lipoprotein-releasing system ATP-binding protein LolD (231 aa).

The ABC transporter domain occupies 11–231; the sequence is LRLEGLTRRF…TLRDGKLVPF (221 aa). Residue 47–54 coordinates ATP; that stretch reads APSGTGKS.

Belongs to the ABC transporter superfamily. Lipoprotein translocase (TC 3.A.1.125) family. In terms of assembly, the complex is composed of two ATP-binding proteins (LolD) and two transmembrane proteins (LolC and LolE).

The protein localises to the cell inner membrane. In terms of biological role, part of the ABC transporter complex LolCDE involved in the translocation of mature outer membrane-directed lipoproteins, from the inner membrane to the periplasmic chaperone, LolA. Responsible for the formation of the LolA-lipoprotein complex in an ATP-dependent manner. The polypeptide is Lipoprotein-releasing system ATP-binding protein LolD (Gluconobacter oxydans (strain 621H) (Gluconobacter suboxydans)).